Reading from the N-terminus, the 310-residue chain is Probable manganese-dependent inorganic pyrophosphatase (310 aa).

Mn(2+)-binding residues include His10, Asp14, Asp16, Asp75, His97, and Asp149.

Belongs to the PPase class C family. The cofactor is Mn(2+).

It is found in the cytoplasm. The enzyme catalyses diphosphate + H2O = 2 phosphate + H(+). The sequence is that of Probable manganese-dependent inorganic pyrophosphatase from Clostridium acetobutylicum (strain ATCC 824 / DSM 792 / JCM 1419 / IAM 19013 / LMG 5710 / NBRC 13948 / NRRL B-527 / VKM B-1787 / 2291 / W).